The sequence spans 444 residues: Signal recognition particle 54 kDa protein (444 aa).

GTP-binding positions include Gly-106 to Thr-113, Asp-187 to Arg-191, and Ser-245 to Asp-248.

Belongs to the GTP-binding SRP family. SRP54 subfamily. Part of the signal recognition particle protein translocation system, which is composed of SRP and FtsY. Archaeal SRP consists of a 7S RNA molecule of 300 nucleotides and two protein subunits: SRP54 and SRP19.

It localises to the cytoplasm. It carries out the reaction GTP + H2O = GDP + phosphate + H(+). Its function is as follows. Involved in targeting and insertion of nascent membrane proteins into the cytoplasmic membrane. Binds to the hydrophobic signal sequence of the ribosome-nascent chain (RNC) as it emerges from the ribosomes. The SRP-RNC complex is then targeted to the cytoplasmic membrane where it interacts with the SRP receptor FtsY. The protein is Signal recognition particle 54 kDa protein of Methanosphaera stadtmanae (strain ATCC 43021 / DSM 3091 / JCM 11832 / MCB-3).